Reading from the N-terminus, the 177-residue chain is Large ribosomal subunit protein uL6 (177 aa).

Residues 151–177 (KRPPEPYKGKGVKYADEHIRRKEGKKS) form a disordered region. The span at 152–177 (RPPEPYKGKGVKYADEHIRRKEGKKS) shows a compositional bias: basic and acidic residues.

The protein belongs to the universal ribosomal protein uL6 family. Part of the 50S ribosomal subunit.

Functionally, this protein binds to the 23S rRNA, and is important in its secondary structure. It is located near the subunit interface in the base of the L7/L12 stalk, and near the tRNA binding site of the peptidyltransferase center. This is Large ribosomal subunit protein uL6 from Fusobacterium nucleatum subsp. nucleatum (strain ATCC 25586 / DSM 15643 / BCRC 10681 / CIP 101130 / JCM 8532 / KCTC 2640 / LMG 13131 / VPI 4355).